The primary structure comprises 136 residues: MSVCGGAPPPAILKEGDLEKRSDSFLQLWKKRRCVLTADGLHLYSDARKRGKAKVLRFDSLAKLECVEWKGERVYFTLVTLGGQEIDFRCRERSRWNAEITLALVGFQNRRAVRELRERKEHQARDNGERLRSWGP.

Residues 12 to 105 (ILKEGDLEKR…WNAEITLALV (94 aa)) enclose the PH domain.

Belongs to the PHLDA2 family.

The protein localises to the cytoplasm. It is found in the membrane. Plays a role in regulating placenta growth. May act via its PH domain that competes with other PH domain-containing proteins, thereby preventing their binding to membrane lipids. This is Pleckstrin homology-like domain family A member 2 (phlda2) from Xenopus tropicalis (Western clawed frog).